Consider the following 431-residue polypeptide: Trigger factor (431 aa).

The PPIase FKBP-type domain occupies 160 to 245 (DDRVTIDFVG…VKKVEVMVLP (86 aa)).

Belongs to the FKBP-type PPIase family. Tig subfamily.

The protein localises to the cytoplasm. The catalysed reaction is [protein]-peptidylproline (omega=180) = [protein]-peptidylproline (omega=0). Its function is as follows. Involved in protein export. Acts as a chaperone by maintaining the newly synthesized protein in an open conformation. Functions as a peptidyl-prolyl cis-trans isomerase. The chain is Trigger factor from Mannheimia succiniciproducens (strain KCTC 0769BP / MBEL55E).